A 123-amino-acid chain; its full sequence is MVLNDDDLYKKHDQLVNLKRQTYEKIFNRCVNTIKLSSDAGELICLFQIPNFLFGTGYPIVNIKYCANYIINKLSEMNENIETTFIDPNILFIDWRKKPNKQPKTTHHFSTNSSEYKSRKSKH.

The interval 100-123 (NKQPKTTHHFSTNSSEYKSRKSKH) is disordered.

This is an uncharacterized protein from Acanthamoeba polyphaga mimivirus (APMV).